A 157-amino-acid polypeptide reads, in one-letter code: 2-C-methyl-D-erythritol 2,4-cyclodiphosphate synthase (157 aa).

The a divalent metal cation site is built by Asp8, His10, and His42. 8–10 (DVH) provides a ligand contact to 4-CDP-2-C-methyl-D-erythritol 2-phosphate. 4-CDP-2-C-methyl-D-erythritol 2-phosphate is bound by residues 56 to 58 (DIG), 132 to 135 (STSE), Phe139, and Arg142.

It belongs to the IspF family. Homotrimer. The cofactor is a divalent metal cation.

It carries out the reaction 4-CDP-2-C-methyl-D-erythritol 2-phosphate = 2-C-methyl-D-erythritol 2,4-cyclic diphosphate + CMP. It functions in the pathway isoprenoid biosynthesis; isopentenyl diphosphate biosynthesis via DXP pathway; isopentenyl diphosphate from 1-deoxy-D-xylulose 5-phosphate: step 4/6. Involved in the biosynthesis of isopentenyl diphosphate (IPP) and dimethylallyl diphosphate (DMAPP), two major building blocks of isoprenoid compounds. Catalyzes the conversion of 4-diphosphocytidyl-2-C-methyl-D-erythritol 2-phosphate (CDP-ME2P) to 2-C-methyl-D-erythritol 2,4-cyclodiphosphate (ME-CPP) with a corresponding release of cytidine 5-monophosphate (CMP). This Dehalococcoides mccartyi (strain ATCC BAA-2266 / KCTC 15142 / 195) (Dehalococcoides ethenogenes (strain 195)) protein is 2-C-methyl-D-erythritol 2,4-cyclodiphosphate synthase.